The sequence spans 321 residues: Chemotaxis protein CheV1 (321 aa).

The 159-residue stretch at 19-177 (ELQLLCFRLG…IEKMLIDVFP (159 aa)) folds into the CheW-like domain. A Response regulatory domain is found at 198 to 319 (CVLLADDSPS…IQRVVKQFLE (122 aa)). Position 252 is a 4-aspartylphosphate (Asp-252).

In terms of biological role, plays an essential role in chemotaxis signal transduction system in order to colonize the host stomach. May act as a phosphate sink to control the flow of phosphate to CheAY. This Helicobacter pylori (strain ATCC 700392 / 26695) (Campylobacter pylori) protein is Chemotaxis protein CheV1.